The following is a 445-amino-acid chain: Glutamyl-tRNA reductase (445 aa).

Substrate-binding positions include 49–52 (TCNR), S109, 114–116 (ETQ), and Q120. C50 acts as the Nucleophile in catalysis. Position 189–194 (189–194 (GAGEMS)) interacts with NADP(+).

The protein belongs to the glutamyl-tRNA reductase family. In terms of assembly, homodimer.

The catalysed reaction is (S)-4-amino-5-oxopentanoate + tRNA(Glu) + NADP(+) = L-glutamyl-tRNA(Glu) + NADPH + H(+). It participates in porphyrin-containing compound metabolism; protoporphyrin-IX biosynthesis; 5-aminolevulinate from L-glutamyl-tRNA(Glu): step 1/2. Catalyzes the NADPH-dependent reduction of glutamyl-tRNA(Glu) to glutamate 1-semialdehyde (GSA). The protein is Glutamyl-tRNA reductase of Staphylococcus carnosus (strain TM300).